A 495-amino-acid chain; its full sequence is ATP synthase subunit beta, chloroplastic (495 aa).

ATP is bound at residue G172–T179.

This sequence belongs to the ATPase alpha/beta chains family. F-type ATPases have 2 components, CF(1) - the catalytic core - and CF(0) - the membrane proton channel. CF(1) has five subunits: alpha(3), beta(3), gamma(1), delta(1), epsilon(1). CF(0) has four main subunits: a(1), b(1), b'(1) and c(9-12).

Its subcellular location is the plastid. The protein localises to the chloroplast thylakoid membrane. The catalysed reaction is ATP + H2O + 4 H(+)(in) = ADP + phosphate + 5 H(+)(out). Produces ATP from ADP in the presence of a proton gradient across the membrane. The catalytic sites are hosted primarily by the beta subunits. The chain is ATP synthase subunit beta, chloroplastic from Eucomis bicolor (King's flower).